The sequence spans 585 residues: Arginine--tRNA ligase (585 aa).

A 'HIGH' region motif is present at residues 131–141 (ANPTGPMHVGH).

Belongs to the class-I aminoacyl-tRNA synthetase family. As to quaternary structure, monomer.

It is found in the cytoplasm. It catalyses the reaction tRNA(Arg) + L-arginine + ATP = L-arginyl-tRNA(Arg) + AMP + diphosphate. The chain is Arginine--tRNA ligase from Brucella canis (strain ATCC 23365 / NCTC 10854 / RM-666).